A 498-amino-acid chain; its full sequence is 3-octaprenyl-4-hydroxybenzoate carboxy-lyase (498 aa).

Asn-175 serves as a coordination point for Mn(2+). Prenylated FMN is bound by residues 178 to 180, 192 to 194, and 197 to 198; these read IYR, RWL, and RG. Glu-241 is a binding site for Mn(2+). Asp-290 functions as the Proton donor in the catalytic mechanism.

The protein belongs to the UbiD family. As to quaternary structure, homohexamer. Prenylated FMN is required as a cofactor. Requires Mn(2+) as cofactor.

The protein resides in the cell membrane. The catalysed reaction is a 4-hydroxy-3-(all-trans-polyprenyl)benzoate + H(+) = a 2-(all-trans-polyprenyl)phenol + CO2. The protein operates within cofactor biosynthesis; ubiquinone biosynthesis. In terms of biological role, catalyzes the decarboxylation of 3-octaprenyl-4-hydroxy benzoate to 2-octaprenylphenol, an intermediate step in ubiquinone biosynthesis. This chain is 3-octaprenyl-4-hydroxybenzoate carboxy-lyase, found in Yersinia pseudotuberculosis serotype I (strain IP32953).